Reading from the N-terminus, the 119-residue chain is Ribonuclease P protein component (119 aa).

The protein belongs to the RnpA family. As to quaternary structure, consists of a catalytic RNA component (M1 or rnpB) and a protein subunit.

It carries out the reaction Endonucleolytic cleavage of RNA, removing 5'-extranucleotides from tRNA precursor.. RNaseP catalyzes the removal of the 5'-leader sequence from pre-tRNA to produce the mature 5'-terminus. It can also cleave other RNA substrates such as 4.5S RNA. The protein component plays an auxiliary but essential role in vivo by binding to the 5'-leader sequence and broadening the substrate specificity of the ribozyme. This is Ribonuclease P protein component from Streptococcus equi subsp. equi (strain 4047).